The sequence spans 711 residues: Angiogenic factor with G patch and FHA domains 1 (711 aa).

Residues 1–19 (MASEAPSPPSPSPPPPASP) show a composition bias toward pro residues. Disordered regions lie at residues 1-23 (MASE…EPEL), 137-184 (ALDP…EGPA), 260-297 (PYQT…SEDQ), and 311-400 (EHSG…EDEE). Position 2 is an N-acetylalanine (Ala2). Ser7 and Ser12 each carry phosphoserine. A coiled-coil region spans residues 19-85 (PEPELAQLRR…SKILHCGKNE (67 aa)). The span at 167–176 (AVTSDSQESV) shows a compositional bias: polar residues. A compositionally biased stretch (basic residues) spans 270-279 (RERRLKKRRK). Residues 287–297 (NEEKDLSSEDQ) show a composition bias toward basic and acidic residues. Residue Ser344 is modified to Phosphoserine. Over residues 361–370 (SESEPEEGEI) the composition is skewed to acidic residues. Positions 374–391 (QSEKSYDGDSSSGDRETS) are enriched in basic and acidic residues. The region spanning 431–484 (ATIGREKDMEHTVRIPEVAVSKFHAEVYFDHDLQSYVLVDQGSQNGTIVNGKQI) is the FHA domain. Composition is skewed to basic and acidic residues over residues 579 to 606 (LKNP…RDDA) and 613 to 623 (EITDSNKGRKM). The segment at 579–623 (LKNPKYKDRAGKRREQVGSEGTFQRDDAPASVHSEITDSNKGRKM) is disordered. The 47-residue stretch at 616-662 (DSNKGRKMLEKMGWKRGEGLGKDGGGMKTPIQLQLRRTHAGLGTGKL) folds into the G-patch domain. Lys661 bears the N6-acetyllysine mark. Basic and acidic residues predominate over residues 690–699 (FTENKPRKET). The interval 690 to 711 (FTENKPRKETPGAVPWVTGTAE) is disordered.

In terms of assembly, interacts with the secreted angiogenic factor TNFSF12.

Its subcellular location is the cytoplasm. It localises to the secreted. Promotes angiogenesis and the proliferation of endothelial cells. Able to bind to endothelial cells and promote cell proliferation, suggesting that it may act in an autocrine fashion. The protein is Angiogenic factor with G patch and FHA domains 1 (Aggf1) of Mus musculus (Mouse).